Consider the following 622-residue polypeptide: Probable potassium transport system protein Kup (622 aa).

The next 12 membrane-spanning stretches (helical) occupy residues 9 to 29 (LPAV…TSPL), 52 to 72 (FLSL…LAFV), 101 to 121 (VLLV…VITP), 137 to 157 (PALT…LFVI), 169 to 189 (FGPV…ISIF), 213 to 233 (VAFF…ALYA), 247 to 267 (WFTV…ALIL), 287 to 309 (FPMV…SGVF), 337 to 357 (IYIP…VVTF), 363 to 383 (LAAA…ILAC), 396 to 416 (VVKI…LANV), and 419 to 439 (FFAG…VMAT).

This sequence belongs to the HAK/KUP transporter (TC 2.A.72) family.

The protein resides in the cell inner membrane. It catalyses the reaction K(+)(in) + H(+)(in) = K(+)(out) + H(+)(out). Functionally, transport of potassium into the cell. Likely operates as a K(+):H(+) symporter. This is Probable potassium transport system protein Kup from Tolumonas auensis (strain DSM 9187 / NBRC 110442 / TA 4).